The chain runs to 458 residues: Argininosuccinate lyase (458 aa).

It belongs to the lyase 1 family. Argininosuccinate lyase subfamily.

Its subcellular location is the cytoplasm. It catalyses the reaction 2-(N(omega)-L-arginino)succinate = fumarate + L-arginine. Its pathway is amino-acid biosynthesis; L-arginine biosynthesis; L-arginine from L-ornithine and carbamoyl phosphate: step 3/3. The sequence is that of Argininosuccinate lyase from Vibrio cholerae serotype O1 (strain ATCC 39541 / Classical Ogawa 395 / O395).